The chain runs to 594 residues: MGKKSRVKTQKSGTGATATVSPKEILNLTSELLQKCSSPAPGPGKEWEEYVQIRTLVEKIRKKQKGLSVTFDGKREDYFPDLMKWASENGASVEGFEMVNFKEEGFGLRATRDIKAEELFLWVPRKLLMTVESAKNSVLGPLYSQDRILQAMGNIALAFHLLCERASPNSFWQPYIQTLPSEYDTPLYFEEDEVRYLQSTQAIHDVFSQYKNTARQYAYFYKVIQTHPHANKLPLKDSFTYEDYRWAVSSVMTRQNQIPTEDGSRVTLALIPLWDMCNHTNGLITTGYNLEDDRCECVALQDFRAGEQIYIFYGTRSNAEFVIHSGFFFDNNSHDRVKIKLGVSKSDRLYAMKAEVLARAGIPTSSVFALHFTEPPISAQLLAFLRVFCMTEEELKEHLLGDSAIDRIFTLGNSEFPVSWDNEVKLWTFLEDRASLLLKTYKTTIEEDKSVLKNHDLSVRAKMAIKLRLGEKEILEKAVKSAAVNREYYRQQMEEKAPLPKYEESNLGLLESSVGDSRLPLVLRNLEEEAGVQDALNIREAISKAKATENGLVNGENSIPNGTRSENESLNQESKRAVEDAKGSSSDSTAGVKE.

A disordered region spans residues 1-22 (MGKKSRVKTQKSGTGATATVSP). Residues 10-20 (QKSGTGATATV) show a composition bias toward polar residues. Residues Arg-75, 104-106 (EGF), Arg-254, 275-279 (DMCNH), and 325-327 (SGF) contribute to the S-adenosyl-L-methionine site. In terms of domain architecture, SET spans 94 to 314 (EGFEMVNFKE…AGEQIYIFYG (221 aa)). Residue Ser-513 is modified to Phosphoserine. The tract at residues 549 to 594 (ENGLVNGENSIPNGTRSENESLNQESKRAVEDAKGSSSDSTAGVKE) is disordered. Over residues 555–572 (GENSIPNGTRSENESLNQ) the composition is skewed to polar residues. Over residues 573-582 (ESKRAVEDAK) the composition is skewed to basic and acidic residues. Residues 583–594 (GSSSDSTAGVKE) show a composition bias toward polar residues.

Belongs to the class V-like SAM-binding methyltransferase superfamily. SETD3 actin-histidine methyltransferase family. Interacts with MYOD1. Post-translationally, phosphorylated by GSK3B, which is required for recognition by the SCF(FBXW7) complex and subsequent degradation. Ubiquitinated by the SCF(FBXW7) complex following phosphorylation by GSK3B, leading to its degradation by the proteasome.

The protein localises to the cytoplasm. It is found in the nucleus. It carries out the reaction L-histidyl-[protein] + S-adenosyl-L-methionine = N(tele)-methyl-L-histidyl-[protein] + S-adenosyl-L-homocysteine + H(+). Protein-histidine N-methyltransferase that specifically mediates 3-methylhistidine (tele-methylhistidine) methylation of actin at 'His-73'. Histidine methylation of actin is required for smooth muscle contraction of the laboring uterus during delivery. Does not have protein-lysine N-methyltransferase activity and probably only catalyzes histidine methylation of actin. This is Actin-histidine N-methyltransferase from Homo sapiens (Human).